The primary structure comprises 307 residues: MLQRTLAKSISVTGVGLHSGERVALTLHPAPENSGISFRRTDLDGEMGEQIKLTPYLINDTRLSSTIVTDKGVRVGTIEHIMSALSAYGIDNALIELNAPEIPIMDGSSLPFIYLLQDAGVVDQKAQKRFLKILKPVEIKEAGKWVRFTPYDGFKVTLTIEFDHPVFNRSSPTFEIDFAGKSYIDEIARARTFGFMHEVEMMRAHNLGLGGNLNNAIVIDDTDVLNPEGLRYPDEFVRHKILDAIGDLYIVGHPIIGAFEGYKSGHAINNALLRAVLADETAYDRVEFADSDDLPDAFHELNIRTCG.

3 residues coordinate Zn(2+): His80, His239, and Asp243. The active-site Proton donor is His266.

The protein belongs to the LpxC family. The cofactor is Zn(2+).

It catalyses the reaction a UDP-3-O-[(3R)-3-hydroxyacyl]-N-acetyl-alpha-D-glucosamine + H2O = a UDP-3-O-[(3R)-3-hydroxyacyl]-alpha-D-glucosamine + acetate. Its pathway is glycolipid biosynthesis; lipid IV(A) biosynthesis; lipid IV(A) from (3R)-3-hydroxytetradecanoyl-[acyl-carrier-protein] and UDP-N-acetyl-alpha-D-glucosamine: step 2/6. Functionally, catalyzes the hydrolysis of UDP-3-O-myristoyl-N-acetylglucosamine to form UDP-3-O-myristoylglucosamine and acetate, the committed step in lipid A biosynthesis. The polypeptide is UDP-3-O-acyl-N-acetylglucosamine deacetylase (Neisseria meningitidis serogroup A / serotype 4A (strain DSM 15465 / Z2491)).